The sequence spans 314 residues: Methenyltetrahydromethanopterin cyclohydrolase (314 aa).

It belongs to the MCH family.

The protein localises to the cytoplasm. The catalysed reaction is 5,10-methenyl-5,6,7,8-tetrahydromethanopterin + H2O = N(5)-formyl-5,6,7,8-tetrahydromethanopterin + H(+). The protein operates within one-carbon metabolism; methanogenesis from CO(2); 5,10-methenyl-5,6,7,8-tetrahydromethanopterin from CO(2): step 3/3. Functionally, catalyzes the reversible interconversion of 5-formyl-H(4)MPT to methenyl-H(4)MPT(+). This Methanocorpusculum labreanum (strain ATCC 43576 / DSM 4855 / Z) protein is Methenyltetrahydromethanopterin cyclohydrolase.